Here is a 323-residue protein sequence, read N- to C-terminus: Fructose-1,6-bisphosphatase class 1 (323 aa).

Positions 88, 107, 109, and 110 each coordinate Mg(2+). Residues 110–113 and Asn-200 each bind substrate; that span reads DGSS. Glu-272 provides a ligand contact to Mg(2+).

This sequence belongs to the FBPase class 1 family. Homotetramer. The cofactor is Mg(2+).

The protein resides in the cytoplasm. It catalyses the reaction beta-D-fructose 1,6-bisphosphate + H2O = beta-D-fructose 6-phosphate + phosphate. Its pathway is carbohydrate biosynthesis; gluconeogenesis. This is Fructose-1,6-bisphosphatase class 1 from Acinetobacter baumannii (strain ATCC 17978 / DSM 105126 / CIP 53.77 / LMG 1025 / NCDC KC755 / 5377).